Reading from the N-terminus, the 743-residue chain is Catalase-peroxidase (743 aa).

Residues 1 to 21 (MSENHETVVSELNEESGGGCP) are disordered. Residues 108–231 (WHSAGTYRIS…LGAVQMGLIY (124 aa)) constitute a cross-link (tryptophyl-tyrosyl-methioninium (Trp-Tyr) (with M-257)). The active-site Proton acceptor is the histidine 109. A cross-link (tryptophyl-tyrosyl-methioninium (Tyr-Met) (with W-108)) is located at residues 231–257 (YVNPEGPNGTPDPLAAARDIRETFRRM). Histidine 272 provides a ligand contact to heme b. Residues 275-296 (GKTHGAGDPDNVGPEPEGAPLE) form a disordered region.

The protein belongs to the peroxidase family. Peroxidase/catalase subfamily. As to quaternary structure, homodimer or homotetramer. Heme b is required as a cofactor. Formation of the three residue Trp-Tyr-Met cross-link is important for the catalase, but not the peroxidase activity of the enzyme.

It catalyses the reaction H2O2 + AH2 = A + 2 H2O. The catalysed reaction is 2 H2O2 = O2 + 2 H2O. In terms of biological role, bifunctional enzyme with both catalase and broad-spectrum peroxidase activity. The sequence is that of Catalase-peroxidase from Parafrankia sp. (strain EAN1pec).